We begin with the raw amino-acid sequence, 29 residues long: Cytochrome b6-f complex subunit 8 (29 aa).

The chain crosses the membrane as a helical span at residues 3-23 (MVSLAWAALMVVFTFSLSLVV).

The protein belongs to the PetN family. As to quaternary structure, the 4 large subunits of the cytochrome b6-f complex are cytochrome b6, subunit IV (17 kDa polypeptide, PetD), cytochrome f and the Rieske protein, while the 4 small subunits are PetG, PetL, PetM and PetN. The complex functions as a dimer.

The protein resides in the plastid. Its subcellular location is the chloroplast thylakoid membrane. Functionally, component of the cytochrome b6-f complex, which mediates electron transfer between photosystem II (PSII) and photosystem I (PSI), cyclic electron flow around PSI, and state transitions. In Cucumis sativus (Cucumber), this protein is Cytochrome b6-f complex subunit 8.